The following is a 418-amino-acid chain: Hepatic and glial cell adhesion molecule (418 aa).

The first 33 residues, 1 to 33 (MKRERGALSRASRALRLSPFVYLLLIQPVPLEG), serve as a signal peptide directing secretion. Residues 34–142 (VNITSPVRLI…GEKTINLTVD (109 aa)) enclose the Ig-like V-type domain. At 34 to 240 (VNITSPVRLI…VKITVYRRSS (207 aa)) the chain is on the extracellular side. Residues Asn35, Asn138, Asn167, and Asn189 are each glycosylated (N-linked (GlcNAc...) asparagine). The 87-residue stretch at 148-234 (PQVLVASTTV…QVRSLPVKIT (87 aa)) folds into the Ig-like C2-type domain. Cys168 and Cys217 are oxidised to a cystine. A helical transmembrane segment spans residues 241-261 (LYIILSTGGIFLLVTLVTVCA). At 262-418 (CWKPSKKSRK…DESGQVEISA (157 aa)) the chain is on the cytoplasmic side. Residues 271 to 418 (KKRKLEKQNS…DESGQVEISA (148 aa)) are disordered. Ser280 is subject to Phosphoserine. Residues 287–308 (NDDRLKSEADTLPRSGEQERKN) are compositionally biased toward basic and acidic residues. Residues Ser321, Ser352, and Ser379 each carry the phosphoserine modification. Residues 341–358 (GYSVSPPVPGRSPGLPIR) are compositionally biased toward low complexity. Residues 385–396 (SSPGRSRSSSRS) are compositionally biased toward low complexity.

Homodimer. Dimer formation occurs predominantly through cis interactions on the cell surface. Part of a complex containing MLC1, TRPV4, AQP4 and ATP1B1. Interacts with CLCN2. In terms of processing, N-glycosylated.

The protein resides in the cytoplasm. It is found in the cell membrane. In terms of biological role, involved in regulating cell motility and cell-matrix interactions. May inhibit cell growth through suppression of cell proliferation. In glia, associates and targets CLCN2 at astrocytic processes and myelinated fiber tracts where it may regulate transcellular chloride flux involved in neuron excitability. This Mus musculus (Mouse) protein is Hepatic and glial cell adhesion molecule.